Reading from the N-terminus, the 307-residue chain is S-methyl-5'-thioadenosine phosphorylase (307 aa).

Residues S16, 59-60 (RH), and 92-93 (SA) contribute to the phosphate site. M198 provides a ligand contact to substrate. Residue S199 participates in phosphate binding. Substrate is bound at residue 222-224 (DYD).

Belongs to the PNP/MTAP phosphorylase family. MTAP subfamily. Homotrimer.

The protein resides in the cytoplasm. It localises to the nucleus. It catalyses the reaction S-methyl-5'-thioadenosine + phosphate = 5-(methylsulfanyl)-alpha-D-ribose 1-phosphate + adenine. The protein operates within amino-acid biosynthesis; L-methionine biosynthesis via salvage pathway; S-methyl-5-thio-alpha-D-ribose 1-phosphate from S-methyl-5'-thioadenosine (phosphorylase route): step 1/1. Functionally, catalyzes the reversible phosphorylation of S-methyl-5'-thioadenosine (MTA) to adenine and 5-methylthioribose-1-phosphate. Involved in the breakdown of MTA, a major by-product of polyamine biosynthesis. Responsible for the first step in the methionine salvage pathway after MTA has been generated from S-adenosylmethionine. Has broad substrate specificity with 6-aminopurine nucleosides as preferred substrates. The sequence is that of S-methyl-5'-thioadenosine phosphorylase from Schizosaccharomyces pombe (strain 972 / ATCC 24843) (Fission yeast).